The primary structure comprises 46 residues: Phoratoxin (46 aa).

Intrachain disulfides connect Cys3–Cys40, Cys4–Cys32, and Cys16–Cys26. His46 carries the post-translational modification Blocked carboxyl end (His).

Belongs to the plant thionin (TC 1.C.44) family.

It localises to the secreted. Thionins are small plant proteins which are toxic to animal cells. They seem to exert their toxic effect at the level of the cell membrane. Their precise function is not known. This chain is Phoratoxin, found in Phoradendron leucarpum subsp. tomentosum (California mistletoe).